A 263-amino-acid polypeptide reads, in one-letter code: Ribosomal RNA small subunit methyltransferase A (263 aa).

S-adenosyl-L-methionine-binding residues include I18, G43, E65, D91, and N110.

Belongs to the class I-like SAM-binding methyltransferase superfamily. rRNA adenine N(6)-methyltransferase family. RsmA subfamily.

It localises to the cytoplasm. The enzyme catalyses adenosine(1518)/adenosine(1519) in 16S rRNA + 4 S-adenosyl-L-methionine = N(6)-dimethyladenosine(1518)/N(6)-dimethyladenosine(1519) in 16S rRNA + 4 S-adenosyl-L-homocysteine + 4 H(+). Functionally, specifically dimethylates two adjacent adenosines (A1518 and A1519) in the loop of a conserved hairpin near the 3'-end of 16S rRNA in the 30S particle. May play a critical role in biogenesis of 30S subunits. This is Ribosomal RNA small subunit methyltransferase A from Ehrlichia chaffeensis (strain ATCC CRL-10679 / Arkansas).